The chain runs to 954 residues: Glycine dehydrogenase (decarboxylating) (954 aa).

N6-(pyridoxal phosphate)lysine is present on lysine 704.

This sequence belongs to the GcvP family. As to quaternary structure, the glycine cleavage system is composed of four proteins: P, T, L and H. Pyridoxal 5'-phosphate serves as cofactor.

The catalysed reaction is N(6)-[(R)-lipoyl]-L-lysyl-[glycine-cleavage complex H protein] + glycine + H(+) = N(6)-[(R)-S(8)-aminomethyldihydrolipoyl]-L-lysyl-[glycine-cleavage complex H protein] + CO2. Functionally, the glycine cleavage system catalyzes the degradation of glycine. The P protein binds the alpha-amino group of glycine through its pyridoxal phosphate cofactor; CO(2) is released and the remaining methylamine moiety is then transferred to the lipoamide cofactor of the H protein. The chain is Glycine dehydrogenase (decarboxylating) from Vibrio vulnificus (strain CMCP6).